Consider the following 162-residue polypeptide: Protein NrdI (162 aa).

Belongs to the NrdI family.

Its function is as follows. Probably involved in ribonucleotide reductase function. The protein is Protein NrdI of Streptococcus pyogenes serotype M2 (strain MGAS10270).